The sequence spans 2758 residues: Highly reducing polyketide synthase NEC1 (2758 aa).

A Ketosynthase family 3 (KS3) domain is found at E153 to D492. The disordered stretch occupies residues P512–T576. Low complexity predominate over residues T566–T576. Residues V700–D1044 form a malonyl-CoA:ACP transacylase (MAT) domain region. S790 serves as the catalytic For malonyltransferase activity. An N-terminal hotdog fold region spans residues H1124 to T1255. A dehydratase (DH) domain region spans residues H1124–S1442. In terms of domain architecture, PKS/mFAS DH spans H1124–S1443. The active-site Proton acceptor; for dehydratase activity is H1156. The C-terminal hotdog fold stretch occupies residues T1283 to S1443. D1351 (proton donor; for dehydratase activity) is an active-site residue. Positions L1622–L1727 are methyltransferase (CMet) domain. Residues G2031–L2344 form an enoyl reductase (ER) domain region. The interval A2372 to V2553 is ketoreductase (KR) domain. Residues E2673 to S2750 enclose the Carrier domain. An O-(pantetheine 4'-phosphoryl)serine modification is found at S2710.

Functionally, highly reducing polyketide synthase; part of the gene cluster that mediates the biosynthesis of nectriapyrone and its analogs phomopyrone A, acropyrone and zaepyrone. The nectriapyrone biosynthetic gene cluster consists of two genes, the highly reducing polyketide synthase NEC1 that produces a demethylated analog of nectriapyrone from one unit of acetyl-CoA and one unit of malonyl-CoA; and the O-methyltransferase NEC2 that further methylates the NEC1 product to yield nectriapyrone. Nectriapyrone is further hydrolyzed to nectriapyrone D, also known as gulypyrone B, by an unidentified hydrolase localized outside the nectriapyrone cluster. This chain is Highly reducing polyketide synthase NEC1, found in Pyricularia oryzae (strain 70-15 / ATCC MYA-4617 / FGSC 8958) (Rice blast fungus).